A 163-amino-acid chain; its full sequence is Putative pre-16S rRNA nuclease (163 aa).

The protein belongs to the YqgF nuclease family.

The protein localises to the cytoplasm. Could be a nuclease involved in processing of the 5'-end of pre-16S rRNA. The polypeptide is Putative pre-16S rRNA nuclease (Roseobacter denitrificans (strain ATCC 33942 / OCh 114) (Erythrobacter sp. (strain OCh 114))).